The sequence spans 757 residues: Polyribonucleotide nucleotidyltransferase (757 aa).

Residues Asp-532 and Asp-538 each contribute to the Mg(2+) site. Residues 598–657 (PRVTAIKVPVDKIGEVIGPKGKMINSITEQTGANISIEDDGTVFVGATDGPSAQAAIDMI) form the KH domain. The region spanning 669–738 (GERFLGTVVK…NRGKISLIPV (70 aa)) is the S1 motif domain.

This sequence belongs to the polyribonucleotide nucleotidyltransferase family. The cofactor is Mg(2+).

The protein localises to the cytoplasm. It carries out the reaction RNA(n+1) + phosphate = RNA(n) + a ribonucleoside 5'-diphosphate. In terms of biological role, involved in mRNA degradation. Catalyzes the phosphorolysis of single-stranded polyribonucleotides processively in the 3'- to 5'-direction. The protein is Polyribonucleotide nucleotidyltransferase of Rhodococcus jostii (strain RHA1).